The sequence spans 431 residues: Serine--tRNA ligase (431 aa).

238–240 (TAE) contributes to the L-serine binding site. An ATP-binding site is contributed by 269–271 (RSE). E292 contributes to the L-serine binding site. 356-359 (EISS) serves as a coordination point for ATP. S392 contacts L-serine.

Belongs to the class-II aminoacyl-tRNA synthetase family. Type-1 seryl-tRNA synthetase subfamily. As to quaternary structure, homodimer. The tRNA molecule binds across the dimer.

The protein resides in the cytoplasm. The catalysed reaction is tRNA(Ser) + L-serine + ATP = L-seryl-tRNA(Ser) + AMP + diphosphate + H(+). It carries out the reaction tRNA(Sec) + L-serine + ATP = L-seryl-tRNA(Sec) + AMP + diphosphate + H(+). The protein operates within aminoacyl-tRNA biosynthesis; selenocysteinyl-tRNA(Sec) biosynthesis; L-seryl-tRNA(Sec) from L-serine and tRNA(Sec): step 1/1. Functionally, catalyzes the attachment of serine to tRNA(Ser). Is also able to aminoacylate tRNA(Sec) with serine, to form the misacylated tRNA L-seryl-tRNA(Sec), which will be further converted into selenocysteinyl-tRNA(Sec). The protein is Serine--tRNA ligase of Pectobacterium atrosepticum (strain SCRI 1043 / ATCC BAA-672) (Erwinia carotovora subsp. atroseptica).